The chain runs to 453 residues: Bifunctional protein GlmU (453 aa).

The interval 1 to 227 is pyrophosphorylase; sequence MTQDIVILAA…EAEVAGVNDR (227 aa). Residues 8-11, lysine 22, glutamine 73, 78-79, 100-102, glycine 137, glutamate 152, asparagine 167, and asparagine 225 contribute to the UDP-N-acetyl-alpha-D-glucosamine site; these read LAAG, GT, and YGD. Position 102 (aspartate 102) interacts with Mg(2+). Asparagine 225 contributes to the Mg(2+) binding site. The linker stretch occupies residues 228 to 248; it reads VQLAALERELQNQQAVSLMQN. Residues 249 to 453 are N-acetyltransferase; it reads GATLLDPSRI…KDNWPRPIKK (205 aa). Arginine 331 and lysine 349 together coordinate UDP-N-acetyl-alpha-D-glucosamine. Residue histidine 361 is the Proton acceptor of the active site. Tyrosine 364 and asparagine 375 together coordinate UDP-N-acetyl-alpha-D-glucosamine. Acetyl-CoA is bound by residues alanine 378, 384–385, serine 403, alanine 421, and arginine 438; that span reads NY.

This sequence in the N-terminal section; belongs to the N-acetylglucosamine-1-phosphate uridyltransferase family. It in the C-terminal section; belongs to the transferase hexapeptide repeat family. As to quaternary structure, homotrimer. The cofactor is Mg(2+).

The protein localises to the cytoplasm. It catalyses the reaction alpha-D-glucosamine 1-phosphate + acetyl-CoA = N-acetyl-alpha-D-glucosamine 1-phosphate + CoA + H(+). The catalysed reaction is N-acetyl-alpha-D-glucosamine 1-phosphate + UTP + H(+) = UDP-N-acetyl-alpha-D-glucosamine + diphosphate. It functions in the pathway nucleotide-sugar biosynthesis; UDP-N-acetyl-alpha-D-glucosamine biosynthesis; N-acetyl-alpha-D-glucosamine 1-phosphate from alpha-D-glucosamine 6-phosphate (route II): step 2/2. It participates in nucleotide-sugar biosynthesis; UDP-N-acetyl-alpha-D-glucosamine biosynthesis; UDP-N-acetyl-alpha-D-glucosamine from N-acetyl-alpha-D-glucosamine 1-phosphate: step 1/1. The protein operates within bacterial outer membrane biogenesis; LPS lipid A biosynthesis. Catalyzes the last two sequential reactions in the de novo biosynthetic pathway for UDP-N-acetylglucosamine (UDP-GlcNAc). The C-terminal domain catalyzes the transfer of acetyl group from acetyl coenzyme A to glucosamine-1-phosphate (GlcN-1-P) to produce N-acetylglucosamine-1-phosphate (GlcNAc-1-P), which is converted into UDP-GlcNAc by the transfer of uridine 5-monophosphate (from uridine 5-triphosphate), a reaction catalyzed by the N-terminal domain. The chain is Bifunctional protein GlmU from Marinomonas sp. (strain MWYL1).